A 69-amino-acid chain; its full sequence is Beta-defensin 1 (69 aa).

Positions 1-21 (MKTHYFLLVMLFFLFSQMELG) are cleaved as a signal peptide. The propeptide occupies 22-32 (AGILTSLGRRT). 3 disulfide bridges follow: Cys37–Cys66, Cys44–Cys59, and Cys49–Cys67.

It belongs to the beta-defensin family. Monomer. Homodimer. As to expression, highly expressed in kidney.

It localises to the secreted. The protein resides in the membrane. Its function is as follows. Has bactericidal activity. May act as a ligand for C-C chemokine receptor CCR6. Positively regulates the sperm motility and bactericidal activity in a CCR6-dependent manner. Binds to CCR6 and triggers Ca2+ mobilization in the sperm which is important for its motility. The polypeptide is Beta-defensin 1 (Defb1) (Rattus norvegicus (Rat)).